The primary structure comprises 354 residues: Ferrochelatase (354 aa).

Fe cation contacts are provided by His-214 and Glu-295.

It belongs to the ferrochelatase family.

It is found in the cytoplasm. It catalyses the reaction heme b + 2 H(+) = protoporphyrin IX + Fe(2+). Its pathway is porphyrin-containing compound metabolism; protoheme biosynthesis; protoheme from protoporphyrin-IX: step 1/1. Functionally, catalyzes the ferrous insertion into protoporphyrin IX. This Burkholderia vietnamiensis (strain G4 / LMG 22486) (Burkholderia cepacia (strain R1808)) protein is Ferrochelatase.